A 90-amino-acid polypeptide reads, in one-letter code: Translation initiation factor IF-1 (90 aa).

Residues 15 to 90 enclose the S1-like domain; it reads KKQKRKKEEV…TLGRIVFRHK (76 aa).

The protein belongs to the IF-1 family. As to quaternary structure, component of the 30S ribosomal translation pre-initiation complex which assembles on the 30S ribosome in the order IF-2 and IF-3, IF-1 and N-formylmethionyl-tRNA(fMet); mRNA recruitment can occur at any time during PIC assembly.

It localises to the cytoplasm. Its function is as follows. One of the essential components for the initiation of protein synthesis. Stabilizes the binding of IF-2 and IF-3 on the 30S subunit to which N-formylmethionyl-tRNA(fMet) subsequently binds. Helps modulate mRNA selection, yielding the 30S pre-initiation complex (PIC). Upon addition of the 50S ribosomal subunit IF-1, IF-2 and IF-3 are released leaving the mature 70S translation initiation complex. The chain is Translation initiation factor IF-1 from Mycoplasma sp.